We begin with the raw amino-acid sequence, 318 residues long: MEVLESKPLSAISMVIDAIGVEHDSQNKCYCCNEQIFDRFICRMDNRSYHENCVKCAICESPLAEKCFWKNGTIYCSQHYYKDYSAHRCAGCKKGVSPTDMVYKLKAGLVFHVECHCCTLCGRHLSPGEQILVDDTMMTVSCMSHYPLPMDDPCPPVGPSDVPSCSSDASAVAPYPMDESFPFQIKKEVDAYGYNFEHYSFSDFCDDDSRMLKRRGPRTTIRQNQLDVLNEMFSNTPKPSKHARAKLALETGLSMRVIQVWFQNRRSKERRLKHLCNYLRHYEQRGLIPPPIHFRNEEMDGTDFNSFCGNFEEEDDED.

LIM zinc-binding domains lie at 27–86 (NKCY…DYSA) and 87–152 (HRCA…PMDD). Residues 214 to 273 (RRGPRTTIRQNQLDVLNEMFSNTPKPSKHARAKLALETGLSMRVIQVWFQNRRSKERRLK) constitute a DNA-binding region (homeobox).

The protein resides in the nucleus. Functionally, specifies differentiation of the set of six touch receptor neurons. Binds cooperatively as a heterodimer with unc-86 to sites in the mec-3 gene promoter. The protein is Mechanosensory protein 3 (mec-3) of Caenorhabditis briggsae.